We begin with the raw amino-acid sequence, 689 residues long: Methionine--tRNA ligase (689 aa).

The short motif at 15–25 (PYANGPIHLGH) is the 'HIGH' region element. Residues Cys146, Cys149, Cys159, and Cys162 each contribute to the Zn(2+) site. The short motif at 332–336 (KMSKS) is the 'KMSKS' region element. Residue Lys335 participates in ATP binding. Residues 588-689 (DFAKIDLRIA…EGAQPGMRVK (102 aa)) enclose the tRNA-binding domain.

Belongs to the class-I aminoacyl-tRNA synthetase family. MetG type 1 subfamily. As to quaternary structure, homodimer. Requires Zn(2+) as cofactor.

Its subcellular location is the cytoplasm. It carries out the reaction tRNA(Met) + L-methionine + ATP = L-methionyl-tRNA(Met) + AMP + diphosphate. In terms of biological role, is required not only for elongation of protein synthesis but also for the initiation of all mRNA translation through initiator tRNA(fMet) aminoacylation. The sequence is that of Methionine--tRNA ligase from Shewanella baltica (strain OS155 / ATCC BAA-1091).